Consider the following 35-residue polypeptide: Natriuretic peptide TNPb (35 aa).

Cys9 and Cys25 are oxidised to a cystine.

In terms of tissue distribution, expressed by the venom gland.

The protein resides in the secreted. In terms of biological role, snake venom natriuretic peptide that exhibits vasoactive and probable hypotensive activity. Is only weakly active on natriuretic peptide receptor-C (NPR3). Stimulates cGMP production through the natriuretic peptide receptor 1 (NPR1) with moderate potencies for the rat NPR1 (EC(50)=1200 nM), and very weak potencies over human NPR1 (30% activation at 10 uM). In vivo, does not impact systolic and diastolic blood pressure, as well as heart rate, when intravenously injected in conscious rabbits. Does not affect the bradycardia due to cardiac afferent stimulation (Bezold-Jarisch reflex). The protein is Natriuretic peptide TNPb of Oxyuranus microlepidotus (Inland taipan).